Here is a 381-residue protein sequence, read N- to C-terminus: Protein COS6 (381 aa).

The Cytoplasmic segment spans residues 1–42; the sequence is MKENELKNEKSVDVLSVKQLESQKTVLPQDLFRSSFTWFCYE. Residues 43–63 form a helical membrane-spanning segment; that stretch reads IYKSLVFRIWMLLWLPLSVWW. Residues 64-69 lie on the Extracellular side of the membrane; the sequence is KLSNNW. The chain crosses the membrane as a helical span at residues 70–90; that stretch reads IYPLMVSLLVLFWGPVFVLVI. Residues 91-381 lie on the Cytoplasmic side of the membrane; it reads FRLSRKRSLS…QLSCSEESLA (291 aa).

It belongs to the DUP/COS family.

It localises to the membrane. The polypeptide is Protein COS6 (COS6) (Saccharomyces cerevisiae (strain ATCC 204508 / S288c) (Baker's yeast)).